The primary structure comprises 115 residues: Large ribosomal subunit protein bL19 (115 aa).

Belongs to the bacterial ribosomal protein bL19 family.

In terms of biological role, this protein is located at the 30S-50S ribosomal subunit interface and may play a role in the structure and function of the aminoacyl-tRNA binding site. The protein is Large ribosomal subunit protein bL19 of Streptococcus uberis (strain ATCC BAA-854 / 0140J).